The following is a 257-amino-acid chain: BTB/POZ domain-containing protein KCTD1 (257 aa).

The interval 1–25 is disordered; the sequence is MSRPLITRSPASPLNNQGIPTPAQL. Phosphoserine occurs at positions 9 and 12. Polar residues predominate over residues 9 to 25; sequence SPASPLNNQGIPTPAQL. The region spanning 30–100 is the BTB domain; the sequence is APVHIDVGGH…LRTSKLLIPD (71 aa).

In terms of assembly, forms homopentamers. Interacts with KCTD15, probably forming heteropentamers depending on its abundance in a cell-type dependent manner. Interacts with TFAP2A, TFAP2B and TFAP2C via the BTB domain. Post-translationally, sumoylated.

It is found in the nucleus. In terms of biological role, may repress the transcriptional activity of AP-2 family members, including TFAP2A, TFAP2B and TFAP2C to various extent. The sequence is that of BTB/POZ domain-containing protein KCTD1 (KCTD1) from Bos taurus (Bovine).